Reading from the N-terminus, the 321-residue chain is Probable 3-hydroxyisobutyrate dehydrogenase, mitochondrial (321 aa).

Residues 23–52 (KTVG…IVFD), 86–87 (LP), and T117 each bind NAD(+). K192 is an active-site residue. Residue K267 participates in NAD(+) binding.

Belongs to the HIBADH-related family. 3-hydroxyisobutyrate dehydrogenase subfamily.

The protein localises to the mitochondrion. It carries out the reaction 3-hydroxy-2-methylpropanoate + NAD(+) = 2-methyl-3-oxopropanoate + NADH + H(+). The protein operates within amino-acid degradation; L-valine degradation. In Dictyostelium discoideum (Social amoeba), this protein is Probable 3-hydroxyisobutyrate dehydrogenase, mitochondrial (hibA).